The primary structure comprises 462 residues: Cleavage and polyadenylation specificity factor subunit 7 (462 aa).

Disordered stretches follow at residues 34-68 and 161-213; these read VLTA…NKTP and TRQN…PSVL. A compositionally biased stretch (pro residues) spans 50-62; it reads EPPPPVRQEPAPK. The RRM domain occupies 82–162; it reads AAVYVGSFSW…EKVDVRPATR (81 aa). The segment covering 181-190 has biased composition (basic and acidic residues); the sequence is HSRDSSDSAD. The residue at position 194 (Thr-194) is a Phosphothreonine. At Ser-196 the chain carries Phosphoserine. Lys-345 is covalently cross-linked (Glycyl lysine isopeptide (Lys-Gly) (interchain with G-Cter in SUMO2)). Positions 400-462 are disordered; that stretch reads SVGASGSSSR…HRDRERDRHH (63 aa). Phosphoserine is present on residues Ser-404 and Ser-414. The segment at 409 to 460 is arg/Ser-rich domain; sequence RKRHRSRERSPSRSRESSRRHRDLLHNEDRHDDYFQERNREHERHRDRERDR. Basic and acidic residues-rich tracts occupy residues 416-425 and 432-462; these read ERSPSRSRES and LLHN…DRHH.

Belongs to the RRM CPSF6/7 family. As to quaternary structure, component of the cleavage factor Im (CFIm) complex which is a heterotetramer composed of two subunits of NUDT21/CPSF5 and two subunits of CPSF6 or CPSF7 or a heterodimer of CPSF6 and CPSF7. The cleavage factor Im (CFIm) complex associates with the CPSF and CSTF complexes to promote the assembly of the core mRNA 3'-processing machinery. Interacts with NUDT21/CPSF5. Interacts (via Arg/Ser-rich domain) with FIP1L1 (preferentially via unphosphorylated form and Arg/Glu/Asp-rich region); this interaction mediates, at least in part, the interaction between the CFIm and CPSF complexes and may be inhibited by CPSF7 hyper-phosphorylation. In terms of processing, phosphorylated. Asymmetrically dimethylated on arginine residues by PRMT1.

The protein localises to the nucleus. It is found in the cytoplasm. Its function is as follows. Component of the cleavage factor Im (CFIm) complex that functions as an activator of the pre-mRNA 3'-end cleavage and polyadenylation processing required for the maturation of pre-mRNA into functional mRNAs. CFIm contributes to the recruitment of multiprotein complexes on specific sequences on the pre-mRNA 3'-end, so called cleavage and polyadenylation signals (pA signals). Most pre-mRNAs contain multiple pA signals, resulting in alternative cleavage and polyadenylation (APA) producing mRNAs with variable 3'-end formation. The CFIm complex acts as a key regulator of cleavage and polyadenylation site choice during APA through its binding to 5'-UGUA-3' elements localized in the 3'-untranslated region (UTR) for a huge number of pre-mRNAs. CPSF7 activates directly the mRNA 3'-processing machinery. Binds to pA signals in RNA substrates. The polypeptide is Cleavage and polyadenylation specificity factor subunit 7 (Rattus norvegicus (Rat)).